A 296-amino-acid polypeptide reads, in one-letter code: MNSTLYSTSPGTYWEQYEEVSQHSAHLNVVERLWSAWYAWMQNDVLATGIMSFVMHEIVYFGRSVPWILIDTLGLFKNYKIQNNKIPSLREQWDCAKFVLLSHFTVELPQIWLFHPMAQFFGLSTSVPFPSVWTMMYQIAIFFVLEDTWHYFSHRALHWGPLYKAIHKIHHQYSAPFGMAAEYASPIEVMILGFGTVGCPILWCALTGDLHIFTMYVWIVLRLFQAIDAHSGYEFPWSLHHFLPFWAGADHHDLHHEKFVGNYSSSFRWWDYLLDTEYTPEALKRRREGKLTKKAQ.

3 helical membrane-spanning segments follow: residues 50 to 70 (IMSF…WILI), 98 to 118 (FVLL…HPMA), and 125 to 145 (TSVP…FFVL). The Fatty acid hydroxylase domain occupies 140–276 (AIFFVLEDTW…FRWWDYLLDT (137 aa)). Positions 154 to 158 (HRALH) match the Histidine box-1 motif. Positions 167–171 (HKIHH) match the Histidine box-2 motif. The helical transmembrane segment at 201-221 (ILWCALTGDLHIFTMYVWIVL) threads the bilayer. The Histidine box-3 signature appears at 251-257 (HHDLHHE).

Belongs to the sterol desaturase family. Fe cation is required as a cofactor.

The protein resides in the endoplasmic reticulum membrane. It participates in steroid metabolism; ergosterol biosynthesis. Functionally, sterol-C4-methyl oxidase; part of the third module of ergosterol biosynthesis pathway that includes the late steps of the pathway. Erg25B is a catalytic component of the C-4 demethylation complex that catalyzes the conversion of 4,4-dimethylfecosterol into fecosterol via 4-methylfecosterol. The third module or late pathway involves the ergosterol synthesis itself through consecutive reactions that mainly occur in the endoplasmic reticulum (ER) membrane. Firstly, the squalene synthase erg9 catalyzes the condensation of 2 farnesyl pyrophosphate moieties to form squalene, which is the precursor of all steroids. Squalene synthase is crucial for balancing the incorporation of farnesyl diphosphate (FPP) into sterol and nonsterol isoprene synthesis. Secondly, squalene is converted into lanosterol by the consecutive action of the squalene epoxidase erg1 and the lanosterol synthase erg7. Then, the delta(24)-sterol C-methyltransferase erg6 methylates lanosterol at C-24 to produce eburicol. Eburicol is the substrate of the sterol 14-alpha demethylase encoded by cyp51A and cyp51B, to yield 4,4,24-trimethyl ergosta-8,14,24(28)-trienol. The C-14 reductase erg24 then reduces the C14=C15 double bond which leads to 4,4-dimethylfecosterol. A sequence of further demethylations at C-4, involving the C-4 demethylation complex containing the C-4 methylsterol oxidases erg25A or erg25B, the sterol-4-alpha-carboxylate 3-dehydrogenase erg26 and the 3-keto-steroid reductase erg27, leads to the production of fecosterol via 4-methylfecosterol. The C-8 sterol isomerase erg2 then catalyzes the reaction which results in unsaturation at C-7 in the B ring of sterols and thus converts fecosterol to episterol. The sterol-C5-desaturase erg3B then catalyzes the introduction of a C-5 double bond in the B ring to produce 5-dehydroepisterol. The 2 other sterol-C5-desaturases, erg3A and erg3C, seem to be less important in ergosterol biosynthesis. The C-22 sterol desaturase erg5 further converts 5-dehydroepisterol into ergosta-5,7,22,24(28)-tetraen-3beta-ol by forming the C-22(23) double bond in the sterol side chain. Finally, ergosta-5,7,22,24(28)-tetraen-3beta-ol is substrate of the C-24(28) sterol reductases erg4A and erg4B to produce ergosterol. Possible alternative sterol biosynthetic pathways might exist from fecosterol to ergosterol, depending on the activities of the erg3 isoforms. The chain is Methylsterol monooxygenase erg25B from Aspergillus fumigatus (strain ATCC MYA-4609 / CBS 101355 / FGSC A1100 / Af293) (Neosartorya fumigata).